A 228-amino-acid chain; its full sequence is Putative elongation factor Tu-like protein (228 aa).

In terms of domain architecture, tr-type G spans 6–212 (KPHINVGTIG…LPIREKDNPF (207 aa)). Positions 15-22 (GHVDHGKT) are G1. The interval 59-63 (GITIS) is G2. Positions 80–83 (DCPG) are G3. Residues 135-138 (NKCD) are G4. Residues 173–175 (SAV) form a G5 region.

Belongs to the TRAFAC class translation factor GTPase superfamily. Classic translation factor GTPase family. EF-Tu/EF-1A subfamily.

The polypeptide is Putative elongation factor Tu-like protein (Ehrlichia ruminantium (strain Welgevonden)).